Consider the following 72-residue polypeptide: Light-harvesting polypeptide B-885 alpha-1 chain (72 aa).

Residues serine 1–threonine 16 lie on the Cytoplasmic side of the membrane. Residues valine 17–leucine 37 form a helical membrane-spanning segment. Residue histidine 33 coordinates a bacteriochlorophyll. Over glycine 38 to lysine 72 the chain is Periplasmic.

It belongs to the antenna complex alpha subunit family. In terms of assembly, the core complex is formed by different alpha and beta chains, binding bacteriochlorophyll molecules, and arranged most probably in tetrameric structures disposed around the reaction center. The non-pigmented gamma chains may constitute additional components.

The protein localises to the cell inner membrane. Functionally, antenna complexes are light-harvesting systems, which transfer the excitation energy to the reaction centers. The sequence is that of Light-harvesting polypeptide B-885 alpha-1 chain from Rhodocyclus tenuis (Rhodospirillum tenue).